The primary structure comprises 204 residues: MGAYKYVSELWRKKQSDVMRFLQRVRCWEYRQQPSIVRLVRPTRPDKARRLGYKAKQGFVVYRVRVRRGGRKRPVPKGIVYGKPTNQGVTQLKFQRSKRSVAEERAGRKLGGLRVVNSYWLNEDSTYKYYEIILVDPAHNAVRNDPRINWICNPVHKHRELRGLTSEGKKNRGLRGKGHNNHKNRPSRRATWKKNNSISLRRYR.

The tract at residues 162-204 (RGLTSEGKKNRGLRGKGHNNHKNRPSRRATWKKNNSISLRRYR) is disordered. Basic residues predominate over residues 171 to 192 (NRGLRGKGHNNHKNRPSRRATW). Over residues 193 to 204 (KKNNSISLRRYR) the composition is skewed to polar residues.

It belongs to the eukaryotic ribosomal protein eL15 family.

The sequence is that of Large ribosomal subunit protein eL15y (RPL15B) from Arabidopsis thaliana (Mouse-ear cress).